A 270-amino-acid chain; its full sequence is Orotidine 5'-phosphate decarboxylase (270 aa).

The Proton donor role is filled by Lys-95.

Belongs to the OMP decarboxylase family. Type 2 subfamily.

The enzyme catalyses orotidine 5'-phosphate + H(+) = UMP + CO2. The protein operates within pyrimidine metabolism; UMP biosynthesis via de novo pathway; UMP from orotate: step 2/2. In Dechloromonas aromatica (strain RCB), this protein is Orotidine 5'-phosphate decarboxylase.